The chain runs to 606 residues: Transmembrane 9 superfamily member 1 (606 aa).

Positions 1–27 are cleaved as a signal peptide; that stretch reads MTVVGNPRSWSCRWLPILILLLGTGHG. N-linked (GlcNAc...) asparagine glycosylation occurs at N178. Transmembrane regions (helical) follow at residues 237 to 257, 310 to 330, 339 to 359, and 373 to 393; these read LSIINSMVLVFLLVGFVAVIL, VLGVGAQFLALGTGIIVMALL, GAINSAAILLYALTCCISGYV, and VWNIILTTSLFSVPFFLTWSV. A glycan (N-linked (GlcNAc...) asparagine) is linked at N401. The next 4 helical transmembrane spans lie at 412–432, 469–489, 499–519, and 535–555; these read ILLLLTVWLLVGFPLTVIGGI, VGGFLPFSAISVELYYIFATV, GILFFVFAILLSVGACISIAL, and SVLSVGSTGLFIFLYSVFYYA. N559 carries N-linked (GlcNAc...) asparagine glycosylation. Residues 570–590 traverse the membrane as a helical segment; sequence FGYSLLTGYVFFLMLGTISFF.

It belongs to the nonaspanin (TM9SF) (TC 9.A.2) family.

The protein localises to the lysosome membrane. The protein resides in the cytoplasmic vesicle. It is found in the autophagosome membrane. Plays an essential role in autophagy. The polypeptide is Transmembrane 9 superfamily member 1 (TM9SF1) (Pongo abelii (Sumatran orangutan)).